We begin with the raw amino-acid sequence, 98 residues long: Plastocyanin (98 aa).

The Plastocyanin-like domain maps to 1 to 98; that stretch reads AAIVKLGGDD…AGMKMTITVQ (98 aa). Cu cation is bound by residues His-38, Cys-83, His-86, and Met-91.

Belongs to the plastocyanin family. The cofactor is Cu(2+).

It localises to the plastid. It is found in the chloroplast thylakoid membrane. Participates in electron transfer between P700 and the cytochrome b6-f complex in photosystem I. This is Plastocyanin (PETE) from Ulva prolifera (Green seaweed).